The following is a 359-amino-acid chain: Serine hydrolase-like protein DDB_G0286239 (359 aa).

In terms of domain architecture, AB hydrolase-1 spans 38–289 (LALHGWLDNA…VPGSHHFHME (252 aa)). Ser111 is a catalytic residue. The interval 310–359 (FTPSSTTQQQQQQQQSAENKKGDNHNQIAEQDLSTSNTSSPIISKPKPNL) is disordered. Positions 334-351 (HNQIAEQDLSTSNTSSPI) are enriched in polar residues.

Belongs to the AB hydrolase superfamily.

Probable serine hydrolase. This Dictyostelium discoideum (Social amoeba) protein is Serine hydrolase-like protein DDB_G0286239.